Reading from the N-terminus, the 236-residue chain is Pyridoxal 5'-phosphate synthase subunit PdxT (236 aa).

Position 61–63 (61–63 (GES)) interacts with L-glutamine. The active-site Nucleophile is the cysteine 93. L-glutamine contacts are provided by residues arginine 127 and 163–164 (IR). Residues histidine 215 and glutamate 217 each act as charge relay system in the active site.

The protein belongs to the glutaminase PdxT/SNO family. In terms of assembly, in the presence of PdxS, forms a dodecamer of heterodimers. Only shows activity in the heterodimer.

The catalysed reaction is aldehydo-D-ribose 5-phosphate + D-glyceraldehyde 3-phosphate + L-glutamine = pyridoxal 5'-phosphate + L-glutamate + phosphate + 3 H2O + H(+). The enzyme catalyses L-glutamine + H2O = L-glutamate + NH4(+). Its pathway is cofactor biosynthesis; pyridoxal 5'-phosphate biosynthesis. Catalyzes the hydrolysis of glutamine to glutamate and ammonia as part of the biosynthesis of pyridoxal 5'-phosphate. The resulting ammonia molecule is channeled to the active site of PdxS. The chain is Pyridoxal 5'-phosphate synthase subunit PdxT from Arthrobacter sp. (strain FB24).